A 426-amino-acid polypeptide reads, in one-letter code: Enolase (426 aa).

Gln165 serves as a coordination point for (2R)-2-phosphoglycerate. Glu209 serves as the catalytic Proton donor. Mg(2+) contacts are provided by Asp244, Glu287, and Asp313. Residues Lys338, Arg367, Ser368, and Lys389 each contribute to the (2R)-2-phosphoglycerate site. Residue Lys338 is the Proton acceptor of the active site.

The protein belongs to the enolase family. It depends on Mg(2+) as a cofactor.

The protein resides in the cytoplasm. It localises to the secreted. The protein localises to the cell surface. The enzyme catalyses (2R)-2-phosphoglycerate = phosphoenolpyruvate + H2O. Its pathway is carbohydrate degradation; glycolysis; pyruvate from D-glyceraldehyde 3-phosphate: step 4/5. In terms of biological role, catalyzes the reversible conversion of 2-phosphoglycerate (2-PG) into phosphoenolpyruvate (PEP). It is essential for the degradation of carbohydrates via glycolysis. The sequence is that of Enolase from Methanococcus vannielii (strain ATCC 35089 / DSM 1224 / JCM 13029 / OCM 148 / SB).